A 482-amino-acid chain; its full sequence is Retinoic acid receptor beta (482 aa).

Positions 1–114 (MSTSSHACPV…PLPPPRVYKP (114 aa)) are modulating. Ser-104 bears the Phosphoserine mark. NR C4-type zinc fingers lie at residues 115 to 135 (CFVCQDKSSGYHYGVSACEGC) and 151 to 175 (CHRDKNCVINKVTRNRCQYCRLQKC). Residues 115–180 (CFVCQDKSSG…RLQKCFEVGM (66 aa)) constitute a DNA-binding region (nuclear receptor). Positions 181-209 (SKESVRNDRNKKKKEPSKQECTESYEMTA) are hinge. Residues 210 to 444 (ELDDLTEKIR…PLIQEMLENS (235 aa)) enclose the NR LBD domain. The tract at residues 443–482 (NSEGHEPLTPSSSGNIAEHSPSVSPSSVENSGVSQSPLLQ) is disordered. Residues 462-482 (SPSVSPSSVENSGVSQSPLLQ) show a composition bias toward low complexity.

This sequence belongs to the nuclear hormone receptor family. NR1 subfamily. Homodimer. Heterodimer; with a RXR molecule. Binds DNA preferentially as a RAR/RXR heterodimer. Heterodimerizes (via NR LBD) with RXRA. Interacts weakly with NCOR2.

The protein resides in the nucleus. Its subcellular location is the cytoplasm. Functionally, receptor for retinoic acid. Retinoic acid receptors bind as heterodimers to their target response elements in response to their ligands, all-trans or 9-cis retinoic acid, and regulate gene expression in various biological processes. The RAR/RXR heterodimers bind to the retinoic acid response elements (RARE) composed of tandem 5'-AGGTCA-3' sites known as DR1-DR5. In the absence of ligand, acts mainly as an activator of gene expression due to weak binding to corepressors. The RXRA/RARB heterodimer can act as a repressor on the DR1 element and as an activator on the DR5 element. In concert with RARG, required for skeletal growth, matrix homeostasis and growth plate function. The polypeptide is Retinoic acid receptor beta (Rarb) (Mus musculus (Mouse)).